We begin with the raw amino-acid sequence, 2641 residues long: Inverse autotransporter adhesin YeeJ (2641 aa).

An N-terminal signal peptide occupies residues 1 to 25 (MGIKLRRLTAGICLITQLVFPMAAA). A LysM domain is found at 50-98 (VPYTLGALESAQSVAERFGISVAELRKLNQFRTFARGFDNVRQGDELDV). Residues 125–400 (TSQQIGSLLA…SRFDLVDRNN (276 aa)) are inverse autotransporter. The interval 513-605 (QKDSSVSLSS…GVDAAKAPAV (93 aa)) is invasin 3 domain. 17 Big-1 domains span residues 617–711 (HSSI…AGFI), 721–815 (IATL…VSFV), 822–913 (QVDL…VIFI), 920–1017 (ALTL…MTFV), 1024–1116 (VVVL…VNIA), 1123–1220 (QVTL…VTFV), 1227–1319 (VVVL…VNIA), 1326–1423 (QVTL…VTFV), 1430–1523 (LVVL…VHFI), 1531–1633 (IIEL…SINV), 1641–1734 (HLTL…VTYV), 1741–1837 (EISL…VNFI), 1844–1941 (QVNL…VTLI), 1948–2032 (KLAS…PTEV), 2048–2141 (ITSL…VIDQ), 2142–2235 (KLTL…IVKV), and 2244–2336 (VASF…ITLV). A C-type lectin domain region spans residues 2538–2641 (KSWWVNAGDA…FAYATCYKNL (104 aa)).

Belongs to the intimin/invasin family.

It is found in the cell outer membrane. In terms of biological role, a probable inverse autotransporter, it may be involved in biofilm formation and cell adhesion. May bind peptidoglycan via its LysM domain. The chain is Inverse autotransporter adhesin YeeJ (yeeJ) from Escherichia coli O157:H7.